A 445-amino-acid chain; its full sequence is Methionine aminopeptidase 2 (445 aa).

Positions 1-89 (MAAQAPVDEI…DPPRVLISQL (89 aa)) are disordered. Over residues 60–74 (AKKKKKRKPKKKKKN) the composition is skewed to basic residues. A substrate-binding site is contributed by His-198. Asp-218, Asp-229, and His-298 together coordinate a divalent metal cation. Substrate is bound at residue His-306. Residues Glu-331 and Glu-426 each coordinate a divalent metal cation.

This sequence belongs to the peptidase M24A family. Methionine aminopeptidase eukaryotic type 2 subfamily. It depends on Co(2+) as a cofactor. Zn(2+) is required as a cofactor. Mn(2+) serves as cofactor. Requires Fe(2+) as cofactor.

The protein resides in the cytoplasm. The catalysed reaction is Release of N-terminal amino acids, preferentially methionine, from peptides and arylamides.. Functionally, cotranslationally removes the N-terminal methionine from nascent proteins. The N-terminal methionine is often cleaved when the second residue in the primary sequence is small and uncharged (Met-Ala-, Cys, Gly, Pro, Ser, Thr, or Val). This is Methionine aminopeptidase 2 from Podospora anserina (strain S / ATCC MYA-4624 / DSM 980 / FGSC 10383) (Pleurage anserina).